The sequence spans 285 residues: Polyamine aminopropyltransferase (285 aa).

Residues 5–238 (EMWYETLHTG…GIMTFAWASD (234 aa)) enclose the PABS domain. Residue Q33 coordinates S-methyl-5'-thioadenosine. Residues H64 and D88 each contribute to the spermidine site. Residues E108 and 140-141 (DG) each bind S-methyl-5'-thioadenosine. The Proton acceptor role is filled by D158. Position 158-161 (158-161 (DCTD)) interacts with spermidine. An S-methyl-5'-thioadenosine-binding site is contributed by P165.

It belongs to the spermidine/spermine synthase family. In terms of assembly, homodimer or homotetramer.

It is found in the cytoplasm. The catalysed reaction is S-adenosyl 3-(methylsulfanyl)propylamine + putrescine = S-methyl-5'-thioadenosine + spermidine + H(+). It functions in the pathway amine and polyamine biosynthesis; spermidine biosynthesis; spermidine from putrescine: step 1/1. Functionally, catalyzes the irreversible transfer of a propylamine group from the amino donor S-adenosylmethioninamine (decarboxy-AdoMet) to putrescine (1,4-diaminobutane) to yield spermidine. The polypeptide is Polyamine aminopropyltransferase (Erwinia tasmaniensis (strain DSM 17950 / CFBP 7177 / CIP 109463 / NCPPB 4357 / Et1/99)).